The primary structure comprises 424 residues: UPF0597 protein SO_1403 (424 aa).

This sequence belongs to the UPF0597 family.

The protein is UPF0597 protein SO_1403 of Shewanella oneidensis (strain ATCC 700550 / JCM 31522 / CIP 106686 / LMG 19005 / NCIMB 14063 / MR-1).